The following is a 269-amino-acid chain: Phosphate import ATP-binding protein PstB (269 aa).

The 242-residue stretch at 23–264 (IATRNLEFYY…PSKQQTEDYI (242 aa)) folds into the ABC transporter domain. Residue 55–62 (GPSGCGKS) coordinates ATP.

It belongs to the ABC transporter superfamily. Phosphate importer (TC 3.A.1.7) family. As to quaternary structure, the complex is composed of two ATP-binding proteins (PstB), two transmembrane proteins (PstC and PstA) and a solute-binding protein (PstS).

Its subcellular location is the cell inner membrane. It carries out the reaction phosphate(out) + ATP + H2O = ADP + 2 phosphate(in) + H(+). Part of the ABC transporter complex PstSACB involved in phosphate import. Responsible for energy coupling to the transport system. The polypeptide is Phosphate import ATP-binding protein PstB (Xylella fastidiosa (strain Temecula1 / ATCC 700964)).